The following is a 1004-amino-acid chain: MVQLYNLHPFGSQQVVPCKLEPDRFCGGGRDALFVAAGCKVEAFAVAGQELCQPRCAFSTLGRVLRLAYSEAGDYLVAIEEKNKATFLRAYVNWRNKRTENSRVCIRMIGHNVEGPFSKAFRDQMYIIEMPLSEAPLCISCCPVKGDLLVGCTNKLVLFSLKYQIINEEFSLLDFERSLIIHIDNITPVEVSFCVGYVAVMSDLEVLIVKLESGPKNGERVHHHPHKTNNRIRRTEEGISNEISQLESDDFVICQKPLELLGEKSEQSGLSVTLESTGLADEKRKYSHFQHLLYRRFAPDISSYVLSDDIKLHSLQLLPIYQTGSLTSDGKNLSQEKELLSLFCFFSLPHVGYLYMVVKSVELMSVYQYPEKSQQAVLTPQFLHVITSNNLQCFTVRCSAAAAREEDPYMDTTLKACPPVSMDVCALRIQLFIGLKAICHFKNHIILLTKAEPEAIPERRQSPKRLLSRKDTSVKIKIPPVAEAGWNLYIVNTISPVQLYKEMVDYSNTYKTVKTQSCIHLLSEAHLLVRAALMDASQLEPGEKAELLEAFKESCGHLGDCYSRLDSQHSHLTLPYYKMSGLSMAEVLARTDWTVEDGLQKYERGLIFYINHSLYENLDEELNEELAAKVVQMFYVAEPKQVPHILCSPSMKNINPLTAMSYLRKLDTSGFSSILVTLTKAAVALKMGDLDMHRNEMKSHSEMKLVCGFILEPRLLIQQRKGQIVPTELALHLKETQPGLLVASVLGLQKNNKIGIEEADSFFKVLCAKDEDTIPQLLVDFWEAQLVACLPDVVLQELFFKLTSQYIWRLSKRQPPDTTPLRTSEDLINACSHYGLIYPWVHVVISSDSLADKNYTEDLSKLQSLICGPSFDIASIIPFLEPLSEDTIAGLSVHVLCRTRLKEYEQCIDILLERCPEAVIPYANHELKEENRTLWWKKLLPELCQRIKCGGEKYQLYLSSLKETLSIVAVELELKDFMNVLPEDGTATFFLPYLLYCSRKKPLT.

The Clathrin-binding motif lies at 172-176 (LLDFE).

Component of the biogenesis of lysosome-related organelles complex-2 (or BLOC2) composed of HPS3, HPS5 and HPS6. Interacts with HPS5. Interacts with HPS6. Widely expressed. Higher levels of expression are observed in kidney, liver and placenta.

It is found in the cytoplasm. The protein resides in the cytosol. Involved in early stages of melanosome biogenesis and maturation. This is BLOC-2 complex member HPS3 (HPS3) from Homo sapiens (Human).